The following is a 1279-amino-acid chain: Botulinum-like toxin eBoNT/J (1279 aa).

Zn(2+) is bound at residue His-225. Glu-226 is an active-site residue. Zn(2+)-binding residues include His-229 and Glu-269. A disulfide bridge links Cys-424 with Cys-438. Positions 435 to 843 (LSSCIEILED…RLTSLPVFNL (409 aa)) are translocation domain (TD). The segment at 476 to 525 (ADTILDSTLSNYDFSKEINFTSTVPIITVEDPLETDEDVPVISEDRTVYV) is belt; not required for channel formation. Residues 860-1080 (IDIQDSEVLN…EVNRLYWKYF (221 aa)) are N-terminus of receptor binding domain (N-RBD). A C-terminus of receptor binding domain (C-RBD) region spans residues 1081 to 1279 (EGSYLRDVWG…IPVDEGWKED (199 aa)). Positions 1250–1253 (SAWY) match the Host ganglioside-binding motif motif.

The protein belongs to the peptidase M27 family. Might be a disulfide-linked heterodimer of a light chain (LC) and heavy chain (HC). The cofactor is Zn(2+).

Its subcellular location is the secreted. It localises to the host cytoplasm. It is found in the host cytosol. The protein localises to the host cell membrane. The protein resides in the host cytoplasmic vesicle membrane. The enzyme catalyses Limited hydrolysis of proteins of the neuroexocytosis apparatus, synaptobrevins, SNAP25 or syntaxin. No detected action on small molecule substrates.. In terms of biological role, strongly resembles a botulinum-type toxin, with the appropriate domains and residues to have proteolytic function, although its C-terminus (which binds to a eukaryotic host cell) is different enough from clostrial botulinum toxins that it might bind another cell target. Might be a precursor of a toxin that binds to an unknown eukaryotic cell receptor(s), and be taken up into the host cell via the endocytic pathway. When the pH of the putative toxin-containing endosome drops a structural rearrangement occurs so that the N-terminus of the heavy chain forms pores that allows the light chain to translocate into the cytosol. Once in the cytosol the disulfide bond linking the 2 subunits is reduced and light chain cleaves its target protein. The protein is Botulinum-like toxin eBoNT/J of Enterococcus sp. (strain 3G1_DIV0629).